The following is a 573-amino-acid chain: Kinesin light chain 1 (573 aa).

Residues 27–156 (KTKQVIQGLE…HLEFMNQLKK (130 aa)) adopt a coiled-coil conformation. Residues 155–176 (KKYDDDISPSEDKDTDSTKEPL) show a composition bias toward basic and acidic residues. Residues 155–203 (KKYDDDISPSEDKDTDSTKEPLDDLFPNDEDDPGQGIQQQHSSAAAAAQ) are disordered. Residue S162 is modified to Phosphoserine. Residues 188-203 (GQGIQQQHSSAAAAAQ) are compositionally biased toward low complexity. TPR repeat units follow at residues 213–246 (LRTLHNLVIQYASQGRYEVAVPLCKQALEDLEKT), 255–288 (ATMLNILALVYRDQNKYKDAANLLNDALAIREKT), 297–330 (AATLNNLAVLYGKRGKYKEAEPLCKRALEIREKV), 339–372 (AKQLNNLALLCQNQGKYEEVEYYYQRALEIYQTK), and 381–414 (AKTKNNLASCYLKQGKFKQAETLYKEILTRAHER). Y449 bears the Phosphotyrosine mark. S460 carries the phosphoserine modification. Residues 464-497 (TTTLKNLGALYRRQGKFEAAETLEEAAMRSRKQG) form a TPR 6 repeat. S521 and S524 each carry phosphoserine; by AMPK. The residue at position 547 (E547) is a Phosphoserine. A disordered region spans residues 553–573 (SGRASFCGKRQQQQWPGRRHR).

The protein belongs to the kinesin light chain family. Oligomeric complex composed of two heavy chains and two light chains. Interacts with SPAG9. Interacts with ATCAY; may link mitochondria to KLC1 and regulate mitochondria localization into neuron projections. Interacts (via TPR repeats) with TOR1A; the interaction associates TOR1A with the kinesin oligomeric complex. Interacts with BORCS5. Interacts with MAPK8IP3/JIP3 and NTRK2/TRKB; interaction with NTRK2/TRKB is mediated by MAPK8IP3/JIP3. Interacts with CLSTN1; phosphorylation at Ser-460 inhibits interaction with CLSTN1. As to quaternary structure, (Microbial infection) Interacts with adenovirus hexon-interlacing protein; this interaction leads to capsid disruption at the nuclear pore complex during virus entry into host cell. Phosphorylation at Ser-460 by ERK inhibits interaction with CLSTN1 and localization to cytoplasmic vesicles. As to expression, found in a variety of tissues. Mostly abundant in brain and spine.

It localises to the cell projection. Its subcellular location is the growth cone. The protein localises to the cytoplasmic vesicle. The protein resides in the cytoplasm. It is found in the cytoskeleton. In terms of biological role, kinesin is a microtubule-associated force-producing protein that may play a role in organelle transport. The light chain may function in coupling of cargo to the heavy chain or in the modulation of its ATPase activity. The chain is Kinesin light chain 1 (KLC1) from Homo sapiens (Human).